The following is a 460-amino-acid chain: MSHQGKIVQCIGAVIDVEFTPGEIPKVYDALVMEGSELTLEVQQQLGDGVVRTIALGSSDGLRRGMMVTNTQKQISVPVGTKTLGRIMDVLGRPIDEMGEIGANSLMPIHRAAPAFDELSASTELLETGIKVIDLVCPFAKGGKIGLFGGAGVGKTVNMMELIRNIAIEHSGYSVFAGVGERTREGNDFYHEMKDSNVLDKVALVYGQMNEPPGNRLRVALTGLTMAEAFRDEGRDVLFFVDNIYRYTLAGTEVSALLGRMPSAVGYQPTLAEEMGRLQERITSSKTGSITSIQAVYVPADDLTDPSPATTFGHLDATVVLSRDIASLGIYPAVDPLDSTSRQLDPLIIGEDHYNTAREVQQTLQRYKELRDIIAILGMDELSPEDKLSVSRARKIQRFLSQPFFVAEVFTGSPGKYVPLKETIKGFKGIVSGEYDDIPEQAFYMVGGIEEVLEKAKSIQ.

149–156 is an ATP binding site; that stretch reads GGAGVGKT.

The protein belongs to the ATPase alpha/beta chains family. As to quaternary structure, F-type ATPases have 2 components, CF(1) - the catalytic core - and CF(0) - the membrane proton channel. CF(1) has five subunits: alpha(3), beta(3), gamma(1), delta(1), epsilon(1). CF(0) has three main subunits: a(1), b(2) and c(9-12). The alpha and beta chains form an alternating ring which encloses part of the gamma chain. CF(1) is attached to CF(0) by a central stalk formed by the gamma and epsilon chains, while a peripheral stalk is formed by the delta and b chains.

The protein resides in the cell inner membrane. It carries out the reaction ATP + H2O + 4 H(+)(in) = ADP + phosphate + 5 H(+)(out). Functionally, produces ATP from ADP in the presence of a proton gradient across the membrane. The catalytic sites are hosted primarily by the beta subunits. This is ATP synthase subunit beta from Nitrosomonas europaea (strain ATCC 19718 / CIP 103999 / KCTC 2705 / NBRC 14298).